Consider the following 417-residue polypeptide: Zinc finger CCCH domain-containing protein ZFN-like (417 aa).

2 C3H1-type zinc fingers span residues 31–58 (PGEP…HPPN) and 75–103 (RLGQ…HPKD). A C3H1-type 3; degenerate zinc finger spans residues 121-149 (RPNESERAYYLRTGQCKFGNTCKFHHPQP). 2 C3H1-type zinc fingers span residues 278-306 (RPDQ…HPRE) and 324-352 (RPGE…HPMG). A disordered region spans residues 383-417 (SSEGLVESGTAKPRRLSLSETRPIPPGDDNIDDEG).

It localises to the nucleus. The polypeptide is Zinc finger CCCH domain-containing protein ZFN-like (Pisum sativum (Garden pea)).